We begin with the raw amino-acid sequence, 273 residues long: NH(3)-dependent NAD(+) synthetase (273 aa).

47–54 (GISGGQDS) provides a ligand contact to ATP. Aspartate 53 contacts Mg(2+). Arginine 139 is a deamido-NAD(+) binding site. Threonine 159 lines the ATP pocket. Glutamate 164 provides a ligand contact to Mg(2+). Deamido-NAD(+)-binding residues include lysine 172 and aspartate 179. ATP is bound by residues lysine 188 and threonine 210. Deamido-NAD(+) is bound at residue 259–260 (HK).

The protein belongs to the NAD synthetase family. In terms of assembly, homodimer.

The catalysed reaction is deamido-NAD(+) + NH4(+) + ATP = AMP + diphosphate + NAD(+) + H(+). It participates in cofactor biosynthesis; NAD(+) biosynthesis; NAD(+) from deamido-NAD(+) (ammonia route): step 1/1. Functionally, catalyzes the ATP-dependent amidation of deamido-NAD to form NAD. Uses ammonia as a nitrogen source. The protein is NH(3)-dependent NAD(+) synthetase of Staphylococcus aureus (strain bovine RF122 / ET3-1).